The following is a 478-amino-acid chain: Sulfate adenylyltransferase subunit 1 (478 aa).

One can recognise a tr-type G domain in the interval 24–240; that stretch reads KSLLRFLTCG…VLENVDIDAD (217 aa). Positions 33–40 are G1; it reads GSVDDGKS. 33-40 contributes to the GTP binding site; it reads GSVDDGKS. The G2 stretch occupies residues 91-95; it reads GITID. Positions 112–115 are G3; it reads DTPG. GTP is bound by residues 112–116 and 167–170; these read DTPGH and NKMD. The G4 stretch occupies residues 167–170; sequence NKMD. The tract at residues 206-208 is G5; sequence SAL.

It belongs to the TRAFAC class translation factor GTPase superfamily. Classic translation factor GTPase family. CysN/NodQ subfamily. As to quaternary structure, heterodimer composed of CysD, the smaller subunit, and CysN.

The enzyme catalyses sulfate + ATP + H(+) = adenosine 5'-phosphosulfate + diphosphate. The protein operates within sulfur metabolism; hydrogen sulfide biosynthesis; sulfite from sulfate: step 1/3. In terms of biological role, with CysD forms the ATP sulfurylase (ATPS) that catalyzes the adenylation of sulfate producing adenosine 5'-phosphosulfate (APS) and diphosphate, the first enzymatic step in sulfur assimilation pathway. APS synthesis involves the formation of a high-energy phosphoric-sulfuric acid anhydride bond driven by GTP hydrolysis by CysN coupled to ATP hydrolysis by CysD. The chain is Sulfate adenylyltransferase subunit 1 from Aliivibrio fischeri (strain ATCC 700601 / ES114) (Vibrio fischeri).